The primary structure comprises 148 residues: uncharacterized protein (148 aa).

This is an uncharacterized protein from Schizosaccharomyces pombe (strain 972 / ATCC 24843) (Fission yeast).